Here is a 97-residue protein sequence, read N- to C-terminus: Putative pterin-4-alpha-carbinolamine dehydratase (97 aa).

This sequence belongs to the pterin-4-alpha-carbinolamine dehydratase family.

It carries out the reaction (4aS,6R)-4a-hydroxy-L-erythro-5,6,7,8-tetrahydrobiopterin = (6R)-L-erythro-6,7-dihydrobiopterin + H2O. This Ruegeria pomeroyi (strain ATCC 700808 / DSM 15171 / DSS-3) (Silicibacter pomeroyi) protein is Putative pterin-4-alpha-carbinolamine dehydratase.